The primary structure comprises 228 residues: Small ribosomal subunit protein uS3 (228 aa).

Residues 39-107 (VREYLQDKLK…PVHINIEEIR (69 aa)) form the KH type-2 domain.

Belongs to the universal ribosomal protein uS3 family. As to quaternary structure, part of the 30S ribosomal subunit. Forms a tight complex with proteins S10 and S14.

In terms of biological role, binds the lower part of the 30S subunit head. Binds mRNA in the 70S ribosome, positioning it for translation. In Pseudomonas fluorescens (strain ATCC BAA-477 / NRRL B-23932 / Pf-5), this protein is Small ribosomal subunit protein uS3.